A 183-amino-acid polypeptide reads, in one-letter code: Capsid protein (183 aa).

The disordered stretch occupies residues leucine 143–cysteine 183. A compositionally biased stretch (basic residues) spans valine 149–serine 176. Residues serine 155, serine 162, and serine 170 each carry the phosphoserine; by host modification. A 1; half-length repeat occupies serine 155 to threonine 160. Residues serine 155–serine 176 form a 3 X 7 AA repeats of S-P-R-R-R-[PR]-S region. The Bipartite nuclear localization signal signature appears at arginine 158–arginine 175. Tandem repeats lie at residues serine 162–serine 168 and serine 170–serine 176. An RNA binding region spans residues glutamine 177–cysteine 183.

It belongs to the orthohepadnavirus core antigen family. Homodimerizes, then multimerizes. Interacts with cytosol exposed regions of viral L glycoprotein present in the reticulum-to-Golgi compartment. Interacts with human FLNB. Phosphorylated form interacts with host importin alpha; this interaction depends on the exposure of the NLS, which itself depends upon genome maturation and/or phosphorylation of the capsid protein. Interacts with host NUP153. Post-translationally, phosphorylated by host SRPK1, SRPK2, and maybe protein kinase C or GAPDH. Phosphorylation is critical for pregenomic RNA packaging. Protein kinase C phosphorylation is stimulated by HBx protein and may play a role in transport of the viral genome to the nucleus at the late step during the viral replication cycle.

The protein resides in the virion. It localises to the host cytoplasm. Its function is as follows. Self assembles to form an icosahedral capsid. Most capsids appear to be large particles with an icosahedral symmetry of T=4 and consist of 240 copies of capsid protein, though a fraction forms smaller T=3 particles consisting of 180 capsid proteins. Entering capsids are transported along microtubules to the nucleus. Phosphorylation of the capsid is thought to induce exposure of nuclear localization signal in the C-terminal portion of the capsid protein that allows binding to the nuclear pore complex via the importin (karyopherin-) alpha and beta. Capsids are imported in intact form through the nuclear pore into the nuclear basket, where it probably binds NUP153. Only capsids that contain the mature viral genome can release the viral DNA and capsid protein into the nucleoplasm. Immature capsids get stuck in the basket. Capsids encapsulate the pre-genomic RNA and the P protein. Pre-genomic RNA is reverse-transcribed into DNA while the capsid is still in the cytoplasm. The capsid can then either be directed to the nucleus, providing more genomes for transcription, or bud through the endoplasmic reticulum to provide new virions. The sequence is that of Capsid protein from Homo sapiens (Human).